A 186-amino-acid chain; its full sequence is Elongation factor P (186 aa).

It belongs to the elongation factor P family.

Its subcellular location is the cytoplasm. It participates in protein biosynthesis; polypeptide chain elongation. Its function is as follows. Involved in peptide bond synthesis. Stimulates efficient translation and peptide-bond synthesis on native or reconstituted 70S ribosomes in vitro. Probably functions indirectly by altering the affinity of the ribosome for aminoacyl-tRNA, thus increasing their reactivity as acceptors for peptidyl transferase. The protein is Elongation factor P of Enterococcus faecalis (strain ATCC 700802 / V583).